Here is a 335-residue protein sequence, read N- to C-terminus: Nucleoid-associated protein YejK (335 aa).

The protein belongs to the YejK family.

It localises to the cytoplasm. The protein localises to the nucleoid. This Escherichia coli (strain K12 / MC4100 / BW2952) protein is Nucleoid-associated protein YejK.